The primary structure comprises 355 residues: Uroporphyrinogen decarboxylase (355 aa).

Substrate contacts are provided by residues arginine 27 to arginine 31, aspartate 77, tyrosine 154, threonine 209, and histidine 327.

This sequence belongs to the uroporphyrinogen decarboxylase family. As to quaternary structure, homodimer.

The protein localises to the cytoplasm. The catalysed reaction is uroporphyrinogen III + 4 H(+) = coproporphyrinogen III + 4 CO2. The protein operates within porphyrin-containing compound metabolism; protoporphyrin-IX biosynthesis; coproporphyrinogen-III from 5-aminolevulinate: step 4/4. Catalyzes the decarboxylation of four acetate groups of uroporphyrinogen-III to yield coproporphyrinogen-III. This is Uroporphyrinogen decarboxylase from Yersinia enterocolitica serotype O:8 / biotype 1B (strain NCTC 13174 / 8081).